Consider the following 406-residue polypeptide: Peptidase T (406 aa).

His-80 serves as a coordination point for Zn(2+). Residue Asp-82 is part of the active site. Asp-141 is a Zn(2+) binding site. Glu-175 (proton acceptor) is an active-site residue. Glu-176, Asp-198, and His-380 together coordinate Zn(2+).

The protein belongs to the peptidase M20B family. Requires Zn(2+) as cofactor.

It localises to the cytoplasm. It carries out the reaction Release of the N-terminal residue from a tripeptide.. Functionally, cleaves the N-terminal amino acid of tripeptides. This Streptococcus mutans serotype c (strain ATCC 700610 / UA159) protein is Peptidase T.